The sequence spans 361 residues: Queuine tRNA-ribosyltransferase (361 aa).

The active-site Proton acceptor is the aspartate 92. Substrate is bound by residues 92 to 96, aspartate 146, glutamine 189, and glycine 216; that span reads DSGGF. The segment at 247 to 253 is RNA binding; it reads GVGKPAD. Residue aspartate 266 is the Nucleophile of the active site. Positions 271 to 275 are RNA binding; important for wobble base 34 recognition; it reads TRSGR. Zn(2+) contacts are provided by cysteine 304, cysteine 306, cysteine 309, and histidine 335.

This sequence belongs to the queuine tRNA-ribosyltransferase family. As to quaternary structure, homodimer. Within each dimer, one monomer is responsible for RNA recognition and catalysis, while the other monomer binds to the replacement base PreQ1. It depends on Zn(2+) as a cofactor.

The enzyme catalyses 7-aminomethyl-7-carbaguanine + guanosine(34) in tRNA = 7-aminomethyl-7-carbaguanosine(34) in tRNA + guanine. It participates in tRNA modification; tRNA-queuosine biosynthesis. In terms of biological role, catalyzes the base-exchange of a guanine (G) residue with the queuine precursor 7-aminomethyl-7-deazaguanine (PreQ1) at position 34 (anticodon wobble position) in tRNAs with GU(N) anticodons (tRNA-Asp, -Asn, -His and -Tyr). Catalysis occurs through a double-displacement mechanism. The nucleophile active site attacks the C1' of nucleotide 34 to detach the guanine base from the RNA, forming a covalent enzyme-RNA intermediate. The proton acceptor active site deprotonates the incoming PreQ1, allowing a nucleophilic attack on the C1' of the ribose to form the product. After dissociation, two additional enzymatic reactions on the tRNA convert PreQ1 to queuine (Q), resulting in the hypermodified nucleoside queuosine (7-(((4,5-cis-dihydroxy-2-cyclopenten-1-yl)amino)methyl)-7-deazaguanosine). This Rickettsia felis (strain ATCC VR-1525 / URRWXCal2) (Rickettsia azadi) protein is Queuine tRNA-ribosyltransferase.